The sequence spans 93 residues: UPF0728 protein C10orf53 (93 aa).

The protein belongs to the UPF0728 family.

This chain is UPF0728 protein C10orf53 (C10orf53), found in Homo sapiens (Human).